The primary structure comprises 341 residues: MSIPIPGIKDISKLKFFYGFKYLWNPTVYNRIFDKLDLTKTYKHPQELKVLDLYPGVGVQSAIFYNKYCPKQYSLIEKRSSLYKFLNAKFEESPLQILKKDPYDWSTYSSLIDEERIFVPEVQPSDHINDKFLTVANVTGEGSEGLIMQWLSCIGNKNWLYRFGKVKMLLWMPSTTAKKLLARPSTHARSKCSVVREAFTDTKLIAISDANELKGFDSHCIEEWDPVIFSAADIWPTKGKPIALVEMDPIDFDFDVDNWDYVTRHLMILKRTPLNTVMDSLGHGGQQYFNSRITDKDLIKKCPIDLTNDEFIYLTKLFMEWPFKPDILMDFVDMYQTEHSG.

The S-adenosyl-L-methionine site is built by L23, E77, D101, and N137.

It belongs to the class I-like SAM-binding methyltransferase superfamily. rRNA adenine N(6)-methyltransferase family.

It localises to the mitochondrion. Mitochondrial transcription factor that confers selective promoter recognition on the core subunit of the yeast mitochondrial RNA polymerase. Interacts with DNA in a non-specific manner. This Saccharomyces paradoxus (Yeast) protein is Mitochondrial transcription factor 1 (MTF1).